Here is a 109-residue protein sequence, read N- to C-terminus: Spermidine export protein MdtI (109 aa).

The Periplasmic segment spans residues 1-5 (MAQFE). Residues 6-26 (WVHAAWLALAIVLEIVANVFL) form a helical membrane-spanning segment. At 27–35 (KFSDGFRRK) the chain is on the cytoplasmic side. A helical membrane pass occupies residues 36 to 56 (IFGLLSLAAVLAAFSALSQAV). The Periplasmic portion of the chain corresponds to 57-63 (KGIDLSV). The chain crosses the membrane as a helical span at residues 64 to 84 (VYALWGGFGIAATLAAGWILF). The Cytoplasmic portion of the chain corresponds to 85-87 (GQR). Residues 88 to 108 (LNRKGWIGLVLLLAGMIMVKL) form a helical membrane-spanning segment. Position 109 (Ala-109) is a topological domain, periplasmic.

The protein belongs to the drug/metabolite transporter (DMT) superfamily. Small multidrug resistance (SMR) (TC 2.A.7.1) family. MdtI subfamily. Forms a complex with MdtJ.

It is found in the cell inner membrane. Functionally, catalyzes the excretion of spermidine. In Shigella flexneri, this protein is Spermidine export protein MdtI (mdtI).